Consider the following 577-residue polypeptide: DNA-directed RNA polymerase subunit alpha (577 aa).

Residues 1–461 (MIKIIIKETF…QLFLPLQQIR (461 aa)) are alpha N-terminal domain (alpha-NTD). Residues 510-577 (FDHRLLELDI…ALQLMKLTLK (68 aa)) are alpha C-terminal domain (alpha-CTD).

It belongs to the RNA polymerase alpha chain family. In terms of assembly, in plastids the minimal PEP RNA polymerase catalytic core is composed of four subunits: alpha, beta, beta', and beta''. When a (nuclear-encoded) sigma factor is associated with the core the holoenzyme is formed, which can initiate transcription.

Its subcellular location is the plastid. The protein resides in the chloroplast. The enzyme catalyses RNA(n) + a ribonucleoside 5'-triphosphate = RNA(n+1) + diphosphate. Functionally, DNA-dependent RNA polymerase catalyzes the transcription of DNA into RNA using the four ribonucleoside triphosphates as substrates. This Tupiella akineta (Green alga) protein is DNA-directed RNA polymerase subunit alpha.